A 240-amino-acid chain; its full sequence is Adenylate dimethylallyltransferase (240 aa).

It belongs to the isopentenyl transferase family.

It catalyses the reaction dimethylallyl diphosphate + AMP = N(6)-(dimethylallyl)adenosine 5'-phosphate + diphosphate. Functionally, transfers dimethylallyl groups to AMP as part of the biosynthesis of cytokinin phytohormones. In Agrobacterium tumefaciens (strain Ach5), this protein is Adenylate dimethylallyltransferase (izt).